A 398-amino-acid polypeptide reads, in one-letter code: Protein FAM53A (398 aa).

The segment at 85–253 (QWQPQSPRPG…TSTPALGGRR (169 aa)) is disordered. Residues 103–115 (VDPSESTGSSTAP) show a composition bias toward polar residues. The segment covering 123-132 (SLSEPEELVR) has biased composition (basic and acidic residues). Ser125 carries the post-translational modification Phosphoserine. Composition is skewed to low complexity over residues 176-193 (STGPTSPATPRPSSASGG) and 234-250 (TPLPWASSSPTSTPALG). A Nuclear localization signal motif is present at residues 268 to 276 (KRSRRKRRR). Ser301 and Ser304 each carry phosphoserine. Residues 336-398 (PGCSQRGLRT…ELDLEQIENN (63 aa)) are disordered. Over residues 363 to 375 (GSRRSSGDPRDGD) the composition is skewed to basic and acidic residues.

Belongs to the FAM53 family.

The protein resides in the nucleus. In terms of biological role, may play an important role in neural development; the dorsomedial roof of the third ventricle. The polypeptide is Protein FAM53A (Homo sapiens (Human)).